The chain runs to 146 residues: U1 small nuclear ribonucleoprotein C (146 aa).

Residues 4-36 (YYCDYCDTYLTHDSPSVRKTHCTGRKHRDNVKF) form a Matrin-type zinc finger. The disordered stretch occupies residues 64 to 96 (NNPFAGGPSSAPPKPSGVSIPPPNMGAPPRPGM). Residues 73–96 (SAPPKPSGVSIPPPNMGAPPRPGM) are compositionally biased toward pro residues.

The protein belongs to the U1 small nuclear ribonucleoprotein C family. As to quaternary structure, U1 snRNP is composed of the 7 core Sm proteins B/B', D1, D2, D3, E, F and G that assemble in a heptameric protein ring on the Sm site of the small nuclear RNA to form the core snRNP, and at least 3 U1 snRNP-specific proteins U1-70K, U1-A and U1-C. U1-C interacts with U1 snRNA and the 5' splice-site region of the pre-mRNA.

It localises to the nucleus. Functionally, component of the spliceosomal U1 snRNP, which is essential for recognition of the pre-mRNA 5' splice-site and the subsequent assembly of the spliceosome. U1-C is directly involved in initial 5' splice-site recognition for both constitutive and regulated alternative splicing. The interaction with the 5' splice-site seems to precede base-pairing between the pre-mRNA and the U1 snRNA. Stimulates commitment or early (E) complex formation by stabilizing the base pairing of the 5' end of the U1 snRNA and the 5' splice-site region. In Drosophila pseudoobscura pseudoobscura (Fruit fly), this protein is U1 small nuclear ribonucleoprotein C.